A 180-amino-acid polypeptide reads, in one-letter code: Adenine phosphoribosyltransferase (180 aa).

N-acetylalanine is present on alanine 2. Serine 15 and serine 30 each carry phosphoserine. Position 60 is a phosphotyrosine (tyrosine 60). Serine 66 is modified (phosphoserine). Threonine 135 carries the post-translational modification Phosphothreonine.

It belongs to the purine/pyrimidine phosphoribosyltransferase family. In terms of assembly, homodimer.

It localises to the cytoplasm. The catalysed reaction is AMP + diphosphate = 5-phospho-alpha-D-ribose 1-diphosphate + adenine. It participates in purine metabolism; AMP biosynthesis via salvage pathway; AMP from adenine: step 1/1. Its function is as follows. Catalyzes a salvage reaction resulting in the formation of AMP, that is energically less costly than de novo synthesis. The protein is Adenine phosphoribosyltransferase of Bos taurus (Bovine).